The following is a 576-amino-acid chain: MNEKHPGPLVVSGKLSDGERMKSESNFLRGTIAEDLNNGLTGGFSGDNFLLIRFHGMYQQDDRDIRAERAEQKLEPRHAMMLRCRLPGGIITPQQWLGIDKFAADNTLYGSIRITNRQTFQFHGILKGNVKPAHQLLNELGLDALATANDVNRNVLCTSNPVESALHQEAYEWAKKISEHLLPRTRAYAEIWLDAEKVATTDEEPILGATYLPRKFKTTVVIPPQNDVDLHANDLNFVAVADKGKLIGFNVLVGGGLSIAHGDKNTYPRKASEFGYIPLKHTLAIAEAVVTTQRDWGNRTDRKNAKTKYTLERVGVETFKAEVEKRAGVSFSAIKPYQFTGRGDRIGWVKGVDKKWHLTLFIENGRLLDYPGRSLKTGVAEIAKIHQGDFRLTANQNLIVAGVPEKDKARIEALAREHGLMDDHVTSQRENSMACVSFPTCPLAMAEAERFLPEFVTRVEGILQQHGLADEHIVLRVTGCPNGCGRALLAEVGLVGKAVGRYNLHLGGNREGTRIPRMYRENITADEILLITDQLVGRWAKERHVDEGFGDFVIRAGVIAPVIDSARDFYDVQEAM.

4 residues coordinate [4Fe-4S] cluster: Cys-435, Cys-441, Cys-480, and Cys-484. Residue Cys-484 participates in siroheme binding.

The protein belongs to the nitrite and sulfite reductase 4Fe-4S domain family. In terms of assembly, alpha(8)-beta(8). The alpha component is a flavoprotein, the beta component is a hemoprotein. Requires siroheme as cofactor. The cofactor is [4Fe-4S] cluster.

The enzyme catalyses hydrogen sulfide + 3 NADP(+) + 3 H2O = sulfite + 3 NADPH + 4 H(+). The protein operates within sulfur metabolism; hydrogen sulfide biosynthesis; hydrogen sulfide from sulfite (NADPH route): step 1/1. Functionally, component of the sulfite reductase complex that catalyzes the 6-electron reduction of sulfite to sulfide. This is one of several activities required for the biosynthesis of L-cysteine from sulfate. This chain is Sulfite reductase [NADPH] hemoprotein beta-component, found in Yersinia pseudotuberculosis serotype IB (strain PB1/+).